A 455-amino-acid chain; its full sequence is uncharacterized protein (455 aa).

Positions 1-27 (MSQRQQFQFLLSFLILIFLKFIIQIRC) are cleaved as a signal peptide. Topologically, residues 29 to 434 (ESNGVIIIKN…GDDENLINSS (406 aa)) are extracellular. Residues asparagine 136, asparagine 148, asparagine 210, and asparagine 298 are each glycosylated (N-linked (GlcNAc...) asparagine). Residues 383-402 (SSSTTSTTSSSSSSSSSTTT) are disordered. Residues asparagine 421 and asparagine 432 are each glycosylated (N-linked (GlcNAc...) asparagine). Residues 435–455 (SVIKFSTPIIMIIIILINIKF) traverse the membrane as a helical segment.

It localises to the membrane. This is an uncharacterized protein from Dictyostelium discoideum (Social amoeba).